A 633-amino-acid chain; its full sequence is MPTTFHEIPRKRPTTPLLDRAQTPDGLRRLGEAELETLADELRLELLYTVGQTGGHFGAGLGVIELTIALHYVFDTPDDRLVWDVGHQAYPHKILTGRREQMASLRQKDGLAAFPRRSESEYDTFGVGHSSTSISAALGMAIAARLQNSERKAIAVIGDGALTAGMAFEALNHAPEVDANMLVILNDNDMSISRNVGGLSNYLAKILSSRTYASMREGSKKVLSRLPGAWEIARRTEEYAKGMLVPGTLFEELGWNYIGPIDGHDLPTLIATLRNMRDLKGPQFLHVVTKKGKGFAPAEVDPIGYHAITKLEPLDAPAAAPKKAGGPKYSGVFGEWLCDMAAADPRLVGITPAMKEGSDLVAFSERFPLRYFDVAIAEQHAVTLAAGMACEGAKPVVAIYSTFLQRGYDQLIHDVAVQNLDVLFAIDRAGLVGEDGPTHAGSFDLSYLRCIPGMLVMTPSDENELRMMLSTGHLYNGPAAVRYPRGTGPNAPIDKSLEPIEIGKGVIRRQGRQVALLVFGVQLAEALQVAEKLDATVVDMRFVKPLDEALVREIASSHELLVTIEENAIMGGAGGAVSEYLARENILKPILHLGLPDAYVEHAKPAQMLAECGLDEAGIEASVRQRLALLGLA.

Residues Met-1–Gln-22 are disordered. Thiamine diphosphate is bound by residues His-87 and Gly-128–Ser-130. Asp-159 contacts Mg(2+). Thiamine diphosphate-binding positions include Gly-160 to Ala-161, Asn-188, Phe-295, and Glu-378. Asn-188 provides a ligand contact to Mg(2+).

Belongs to the transketolase family. DXPS subfamily. As to quaternary structure, homodimer. Mg(2+) is required as a cofactor. It depends on thiamine diphosphate as a cofactor.

The catalysed reaction is D-glyceraldehyde 3-phosphate + pyruvate + H(+) = 1-deoxy-D-xylulose 5-phosphate + CO2. The protein operates within metabolic intermediate biosynthesis; 1-deoxy-D-xylulose 5-phosphate biosynthesis; 1-deoxy-D-xylulose 5-phosphate from D-glyceraldehyde 3-phosphate and pyruvate: step 1/1. Catalyzes the acyloin condensation reaction between C atoms 2 and 3 of pyruvate and glyceraldehyde 3-phosphate to yield 1-deoxy-D-xylulose-5-phosphate (DXP). The polypeptide is 1-deoxy-D-xylulose-5-phosphate synthase (Pseudomonas fluorescens (strain ATCC BAA-477 / NRRL B-23932 / Pf-5)).